The sequence spans 200 residues: MGSQSSKAPRGDVTAEEAAGASPAKANGQENGHVRSNGDLTPKGEGESPPVNGTDEAAGATGDAIEPAPPSQEAEAKGEVAPKETPKKKKKFSFKKPFKLSGLSFKRNRKEGGGDSSASSPTEEEQEQGEMSACSDEGTAQEGKAAATPESQEPQAKGAEASAASKEGDTEEEAGPQAAEPSTPSGPESGPTPASAEQNE.

Positions 1-200 (MGSQSSKAPR…PTPASAEQNE (200 aa)) are disordered. Residue G2 is the site of N-myristoyl glycine attachment. T14 carries the phosphothreonine modification. Positions 16–26 (EEAAGASPAKA) are enriched in low complexity. S22, S36, and S48 each carry phosphoserine. A compositionally biased stretch (low complexity) spans 53-64 (GTDEAAGATGDA). S71 carries the phosphoserine modification. Residues 74-85 (AEAKGEVAPKET) are compositionally biased toward basic and acidic residues. At T85 the chain carries Phosphothreonine. Positions 86–98 (PKKKKKFSFKKPF) are enriched in basic residues. Positions 87–110 (KKKKKFSFKKPFKLSGLSFKRNRK) are effector domain involved in lipid-binding and calmodulin-binding. A phosphoserine; by PKC mark is found at S93, S101, and S104. S119 is modified (phosphoserine). S120 is subject to Phosphoserine; by MAPK8. Residues S132 and S135 each carry the phosphoserine modification. Phosphothreonine; by MAPK8 is present on T148. Phosphoserine occurs at positions 151, 162, and 165. Positions 156–165 (AKGAEASAAS) are enriched in low complexity. A Phosphothreonine modification is found at T170. Residues 178–200 (AAEPSTPSGPESGPTPASAEQNE) show a composition bias toward low complexity. The residue at position 183 (T183) is a Phosphothreonine; by MAPK8. T192 carries the phosphothreonine modification.

It belongs to the MARCKS family. In terms of assembly, binds to filamentous actin (F-actin), but not to monomeric G-actin, independently of its phosphorylation status. Interacts with calmodulin. In terms of processing, phosphorylated. Phosphorylation at Ser-120 and Thr-183 is non-redundantly catalyzed by MAPK8 in vivo. Phosphorylation at Thr-148 is preferentially catalyzed by MAPK8 in vivo, but this modification can also be catalyzed by other kinases in the absence of MAPK8. May be phosphorylated by protein kinase C, which disrupts the interaction with calmodulin. In terms of tissue distribution, expressed at high levels in brain cortex and hippocampus, including dentate gyrus, anterior olfactory nucleus, primary olfactory cortex, entorhinal cortex, medial preoptic area and dorsomedial hypothalamic nucleus (at protein level). Expressed in neuronal cells (at protein level). Detected in the retina. Strongly expressed in testis and uterus; expressed at lower levels in cerebellum, cerebrum, adipose tissue, spleen, kidney, thyroid, liver, lung, skeletal muscle and heart. Detected in T-cells and B-cells.

The protein resides in the cytoplasm. It is found in the cytoskeleton. It localises to the cell membrane. Involved in the control of cell movement by regulating actin cytoskeleton homeostasis and filopodium and lamellipodium formation. When unphosphorylated, induces cell migration. When phosphorylated by MAPK8, induces actin bundles formation and stabilization, thereby reducing actin plasticity, hence restricting cell movement, including neuronal migration. May be involved in coupling the protein kinase C and calmodulin signal transduction systems. This Mus musculus (Mouse) protein is MARCKS-related protein (Marcksl1).